The following is a 651-amino-acid chain: DNA mismatch repair protein MutL (651 aa).

It belongs to the DNA mismatch repair MutL/HexB family.

Functionally, this protein is involved in the repair of mismatches in DNA. It is required for dam-dependent methyl-directed DNA mismatch repair. May act as a 'molecular matchmaker', a protein that promotes the formation of a stable complex between two or more DNA-binding proteins in an ATP-dependent manner without itself being part of a final effector complex. This is DNA mismatch repair protein MutL from Streptococcus mutans serotype c (strain ATCC 700610 / UA159).